The sequence spans 249 residues: 1-(5-phosphoribosyl)-5-[(5-phosphoribosylamino)methylideneamino] imidazole-4-carboxamide isomerase (249 aa).

Asp-8 acts as the Proton acceptor in catalysis. The active-site Proton donor is Asp-130.

The protein belongs to the HisA/HisF family.

It is found in the cytoplasm. It carries out the reaction 1-(5-phospho-beta-D-ribosyl)-5-[(5-phospho-beta-D-ribosylamino)methylideneamino]imidazole-4-carboxamide = 5-[(5-phospho-1-deoxy-D-ribulos-1-ylimino)methylamino]-1-(5-phospho-beta-D-ribosyl)imidazole-4-carboxamide. The protein operates within amino-acid biosynthesis; L-histidine biosynthesis; L-histidine from 5-phospho-alpha-D-ribose 1-diphosphate: step 4/9. The sequence is that of 1-(5-phosphoribosyl)-5-[(5-phosphoribosylamino)methylideneamino] imidazole-4-carboxamide isomerase from Chromohalobacter salexigens (strain ATCC BAA-138 / DSM 3043 / CIP 106854 / NCIMB 13768 / 1H11).